Reading from the N-terminus, the 187-residue chain is Cytokinin riboside 5'-monophosphate phosphoribohydrolase (187 aa).

Residue K74 forms an Isoglutamyl lysine isopeptide (Lys-Gln) (interchain with Q-Cter in protein Pup) linkage. Substrate-binding positions include E80, 98-99, 115-121, and T127; these read RK and GVGTLDE.

This sequence belongs to the LOG family. In terms of assembly, homodimer. Post-translationally, pupylated at Lys-74 by the prokaryotic ubiquitin-like protein Pup, which leads to its degradation by the proteasome. The proteasomal control of cytokinin synthesis is essential to protect M.tuberculosis against host-produced NO.

The enzyme catalyses N(6)-(dimethylallyl)adenosine 5'-phosphate + H2O = N(6)-dimethylallyladenine + D-ribose 5-phosphate. It carries out the reaction 9-ribosyl-trans-zeatin 5'-phosphate + H2O = trans-zeatin + D-ribose 5-phosphate. Functionally, catalyzes the hydrolytic removal of ribose 5'-monophosphate from nitrogen N6-modified adenosines, the final step of bioactive cytokinin synthesis. Is involved in the synthesis of isopentenyladenine (iP) and 2-methylthio-iP (2MeS-iP), the most abundant cytokinins detected in M.tuberculosis lysates and supernatants. Is also able to convert trans-zeatin-riboside monophosphate (tZRMP) to trans-zeatin (tZ) in vitro; however, it may not be involved in the biosynthesis of this minor cytokinin in vivo. Accumulation of Rv1205 sensitizes M.tuberculosis to nitric oxide since cytokinin breakdown products synergize with NO to kill M.tuberculosis. Shows a slow AMP hydrolase activity, but is not able to hydrolyze ATP. Displays no lysine decarboxylase (LDC) activity (L-lysine conversion to cadaverine). The sequence is that of Cytokinin riboside 5'-monophosphate phosphoribohydrolase from Mycobacterium tuberculosis (strain ATCC 25618 / H37Rv).